Consider the following 544-residue polypeptide: Lariat debranching enzyme (544 aa).

Residues Cys-8, His-10, Asp-39, and Asn-84 each contribute to the a divalent metal cation site. The interval 124–154 is lariat recognition loop; the sequence is SGIFKSHDYRKGHFECPPYNSSTIRSIYHVR. N6-acetyllysine is present on Lys-128. His-174, His-226, and His-228 together coordinate a divalent metal cation. Positions 395–412 are enriched in acidic residues; the sequence is EYEEQDDVESNDSGEDQS. The tract at residues 395-463 is disordered; it reads EYEEQDDVES…PSDQASEFSA (69 aa). Polar residues predominate over residues 413–425; it reads EYNTDTSALSSIN. Over residues 429–439 the composition is skewed to acidic residues; that stretch reads IMLDEEEDEDS. The segment covering 445–463 has biased composition (polar residues); sequence SGMNTPSVEPSDQASEFSA. Phosphoserine is present on residues Ser-464, Ser-474, Ser-478, Ser-479, Ser-485, Ser-499, and Ser-514. Residues 476 to 544 are disordered; sequence IVSSDDTVDS…AVDDDDDDAA (69 aa). Over residues 512-522 the composition is skewed to basic and acidic residues; the sequence is RLSDEHEPEQR.

It belongs to the lariat debranching enzyme family. The cofactor is Fe(2+). Requires Zn(2+) as cofactor. Mn(2+) serves as cofactor. In terms of tissue distribution, ubiquitously expressed, strongest expression in the spinal cord and brainstem.

The protein resides in the nucleus. Its activity is regulated as follows. Active in presence of diverse metals including Fe(2+), Zn(2+), Mn(2+). Also activated by Ca(2+). Binds two metal cations in two adjacent alpha and beta metal-binding pockets. Its function is as follows. Cleaves the 2'-5' phosphodiester linkage at the branch point of excised lariat intron RNA and converts them into linear molecules that can be subsequently degraded, thereby facilitating ribonucleotide turnover. Linked to its role in pre-mRNA processing mechanism, may also participate in retrovirus replication via an RNA lariat intermediate in cDNA synthesis and have an antiviral cell-intrinsic defense function in the brainstem. This chain is Lariat debranching enzyme (DBR1), found in Homo sapiens (Human).